The primary structure comprises 71 residues: Small ribosomal subunit protein eS17 (71 aa).

The protein belongs to the eukaryotic ribosomal protein eS17 family.

The chain is Small ribosomal subunit protein eS17 from Pyrobaculum neutrophilum (strain DSM 2338 / JCM 9278 / NBRC 100436 / V24Sta) (Thermoproteus neutrophilus).